The following is a 131-amino-acid chain: ATP synthase lipid-binding protein, mitochondrial (131 aa).

Residues 1-56 (MLSAARLIAPAARSAIFSNAAVVRPLAAVSTQTQLVPAAPAQLSAVRSFQTTSVTK) constitute a mitochondrion transit peptide. Residues 72–92 (VGVAGSGAGIGTVFGSLIIGY) traverse the membrane as a helical segment. At Lys99 the chain carries N6,N6,N6-trimethyllysine. A helical transmembrane segment spans residues 107–127 (ILGFALSEAMGLFCLMMAFLL).

Belongs to the ATPase C chain family. In terms of assembly, F-type ATPases have 2 components, CF(1) - the catalytic core - and CF(0) - the membrane proton channel. CF(1) has five subunits: alpha(3), beta(3), gamma(1), delta(1), epsilon(1). CF(0) has three main subunits: a, b and c. In terms of processing, trimethylated by ATPSCKMT at Lys-99. Methylation may be required for proper incorporation of the C subunit into the ATP synthase complex and mitochondrial respiration.

It localises to the mitochondrion membrane. Mitochondrial membrane ATP synthase (F(1)F(0) ATP synthase or Complex V) produces ATP from ADP in the presence of a proton gradient across the membrane which is generated by electron transport complexes of the respiratory chain. F-type ATPases consist of two structural domains, F(1) - containing the extramembraneous catalytic core and F(0) - containing the membrane proton channel, linked together by a central stalk and a peripheral stalk. During catalysis, ATP synthesis in the catalytic domain of F(1) is coupled via a rotary mechanism of the central stalk subunits to proton translocation. Part of the complex F(0) domain. A homomeric c-ring of probably 10 subunits is part of the complex rotary element. This is ATP synthase lipid-binding protein, mitochondrial from Manduca sexta (Tobacco hawkmoth).